A 386-amino-acid chain; its full sequence is ATP phosphoribosyltransferase regulatory subunit (386 aa).

Belongs to the class-II aminoacyl-tRNA synthetase family. HisZ subfamily. Heteromultimer composed of HisG and HisZ subunits.

It is found in the cytoplasm. It participates in amino-acid biosynthesis; L-histidine biosynthesis; L-histidine from 5-phospho-alpha-D-ribose 1-diphosphate: step 1/9. In terms of biological role, required for the first step of histidine biosynthesis. May allow the feedback regulation of ATP phosphoribosyltransferase activity by histidine. The chain is ATP phosphoribosyltransferase regulatory subunit from Ralstonia nicotianae (strain ATCC BAA-1114 / GMI1000) (Ralstonia solanacearum).